A 357-amino-acid polypeptide reads, in one-letter code: 3-isopropylmalate dehydrogenase (357 aa).

Residues Arg-97, Arg-107, Arg-135, and Asp-224 each coordinate substrate. Residues Asp-224, Asp-248, and Asp-252 each contribute to the Mg(2+) site. NAD(+) is bound at residue 282–294 (GSAPDIAGQDKAN).

This sequence belongs to the isocitrate and isopropylmalate dehydrogenases family. LeuB type 1 subfamily. As to quaternary structure, homodimer. Mg(2+) is required as a cofactor. Requires Mn(2+) as cofactor.

It localises to the cytoplasm. It carries out the reaction (2R,3S)-3-isopropylmalate + NAD(+) = 4-methyl-2-oxopentanoate + CO2 + NADH. It participates in amino-acid biosynthesis; L-leucine biosynthesis; L-leucine from 3-methyl-2-oxobutanoate: step 3/4. Functionally, catalyzes the oxidation of 3-carboxy-2-hydroxy-4-methylpentanoate (3-isopropylmalate) to 3-carboxy-4-methyl-2-oxopentanoate. The product decarboxylates to 4-methyl-2 oxopentanoate. This is 3-isopropylmalate dehydrogenase from Synechococcus sp. (strain CC9605).